A 264-amino-acid polypeptide reads, in one-letter code: uncharacterized protein (264 aa).

Residues 57–264 (RPPASPCPPR…VYPHPHLTAT (208 aa)) form a disordered region. Positions 140–153 (GKARRSPGRRRHPH) are enriched in basic residues. Over residues 154 to 165 (SSFPQASSPSSP) the composition is skewed to low complexity.

This is an uncharacterized protein from Homo sapiens (Human).